The sequence spans 75 residues: Probable pilin MJ1469 (75 aa).

The propeptide occupies 1–11 (MKPKKIISNKA). The short motif at 12–20 (QISLELALL) is the QXSXEXXXL element.

In terms of processing, the N-terminus is cleaved by the prepilin peptidase EppA, which recognizes the class III signal sequence.

It localises to the secreted. The protein localises to the cell surface. It is found in the fimbrium. The polypeptide is Probable pilin MJ1469 (Methanocaldococcus jannaschii (strain ATCC 43067 / DSM 2661 / JAL-1 / JCM 10045 / NBRC 100440) (Methanococcus jannaschii)).